Here is a 590-residue protein sequence, read N- to C-terminus: Myo-inositol transporter 3A (590 aa).

The Cytoplasmic portion of the chain corresponds to 1 to 57; that stretch reads MSATHIENRDDSFLENKGIDHIGRPENNNGSQEPPSPSGFGGHLIDENLVRVEGEDK. Over residues 15–24 the composition is skewed to basic and acidic residues; it reads ENKGIDHIGR. The disordered stretch occupies residues 15-40; that stretch reads ENKGIDHIGRPENNNGSQEPPSPSGF. A helical transmembrane segment spans residues 58-78; that stretch reads VTWYLCFLISASAIAGFLFGY. The Extracellular segment spans residues 79–105; the sequence is DTGVVGVALPLVGTDLGGSALNSSQQE. Asn100 is a glycosylation site (N-linked (GlcNAc...) asparagine). The helical transmembrane segment at 106–126 threads the bilayer; it reads IITAGTTIGAIFGSAILGGWG. Residues 127-132 lie on the Cytoplasmic side of the membrane; the sequence is DRLGRK. Residues 133-153 traverse the membrane as a helical segment; the sequence is GAILVSDVFFTIGAVIIASSY. At 154 to 157 the chain is on the extracellular side; the sequence is SVPQ. A helical membrane pass occupies residues 158–178; that stretch reads IIVGRIILGIGVGGAAVIAPL. Residues 179–192 lie on the Cytoplasmic side of the membrane; the sequence is FITETAPTAVRGRC. The chain crosses the membrane as a helical span at residues 193 to 213; sequence IGVNAFFIPFGQVVSDAIGAG. At 214-222 the chain is on the extracellular side; that stretch reads VQNMHNGWR. Residues 223 to 243 form a helical membrane-spanning segment; it reads LLFALGAVPSLLQLLLFHYLP. The Cytoplasmic portion of the chain corresponds to 244 to 325; it reads ESPRILILKG…AVSALQAAGQ (82 aa). A helical transmembrane segment spans residues 326–346; the sequence is LTGFNTLLYYAGTLFGLLGLS. Over 347-349 the chain is Extracellular; the sequence is NPA. Residues 350-370 traverse the membrane as a helical segment; sequence LGGLIPAGTNAVFVLIGMSLV. The Cytoplasmic segment spans residues 371-376; the sequence is DKVGRR. Residues 377–397 traverse the membrane as a helical segment; the sequence is GLLLIGVPIMLLGHVWNIVSF. Residues 398-420 lie on the Extracellular side of the membrane; sequence YYMCKPTGGFLDTSYSYDTTDVG. Residues 421–441 traverse the membrane as a helical segment; the sequence is IVIGGIVFFVVGYGLTYSHLV. Topologically, residues 442–455 are cytoplasmic; the sequence is WYQAEYLTLEVRSM. The chain crosses the membrane as a helical span at residues 456–476; that stretch reads GSGIATTVCWIANLVVSVSYL. Residues 477-485 lie on the Extracellular side of the membrane; it reads SELETMTPS. Residues 486 to 506 form a helical membrane-spanning segment; that stretch reads GTYGFYFGISVIGFVFLVFCL. Over 507–590 the chain is Cytoplasmic; sequence PETKQLSIDE…GGKRTPSASV (84 aa).

Belongs to the major facilitator superfamily. Sugar transporter (TC 2.A.1.1) family.

It localises to the cell membrane. The enzyme catalyses myo-inositol(out) + H(+)(out) = myo-inositol(in) + H(+)(in). Transporter for myo-inositol. This is Myo-inositol transporter 3A (ITR3A) from Cryptococcus neoformans var. grubii serotype A (strain H99 / ATCC 208821 / CBS 10515 / FGSC 9487) (Filobasidiella neoformans var. grubii).